A 146-amino-acid chain; its full sequence is Hemoglobin subunit beta (146 aa).

Valine 1 is subject to N-acetylvaline. In terms of domain architecture, Globin spans 2–146 (HLSAEEKAAV…VANALAHKYH (145 aa)). Threonine 12 is modified (phosphothreonine). Residue serine 44 is modified to Phosphoserine. Residue lysine 59 is modified to N6-acetyllysine. Histidine 63 contacts heme b. Lysine 82 is modified (N6-acetyllysine). Residue histidine 92 participates in heme b binding. The residue at position 93 (cysteine 93) is an S-nitrosocysteine. Lysine 144 carries the N6-acetyllysine modification.

The protein belongs to the globin family. In terms of assembly, heterotetramer of two alpha chains and two beta chains. In terms of tissue distribution, red blood cells.

Its function is as follows. Involved in oxygen transport from the lung to the various peripheral tissues. The polypeptide is Hemoglobin subunit beta (HBB) (Ctenodactylus gundi (Northern gundi)).